Consider the following 500-residue polypeptide: Versicolorin B desaturase (500 aa).

Residues 3 to 23 (FLSLPSLVIVIPVGYLLFHLG) traverse the membrane as a helical segment. N-linked (GlcNAc...) asparagine glycans are attached at residues asparagine 243 and asparagine 400. Cysteine 438 provides a ligand contact to heme.

It belongs to the cytochrome P450 family. The cofactor is heme.

The protein resides in the membrane. The catalysed reaction is versicolorin B + NADPH + O2 + H(+) = versicolorin A + NADP(+) + 2 H2O. It functions in the pathway mycotoxin biosynthesis; aflatoxin biosynthesis. Its function is as follows. Versicolorin B desaturase; part of the gene cluster that mediates the biosynthesis of aflatoxins, a group of polyketide-derived furanocoumarins, and part of the most toxic and carcinogenic compounds among the known mycotoxins. The four major aflatoxins produced by A.parasiticus are aflatoxin B1 (AFB1), aflatoxin B2 (AFB2), aflatoxin G1 (AFG1) and aflatoxin G2 (AFG2). Within the aflatoxin pathway, the versicolorin B desaturase aflL catalyzes the conversion of versicolorin B (VERB) to versicolorin A (VERA). The biosynthesis of aflatoxins begins with the norsolorinic acid synthase aflC that combines a hexanoyl starter unit produced by the fatty acid synthase aflA/aflB and 7 malonyl-CoA extender units to synthesize the precursor NOR. The second step is the conversion of NOR to averantin and requires the norsolorinic acid ketoreductase aflD, which catalyzes the dehydration of norsolorinic acid to form (1'S)-averantin. The norsolorinic acid reductases aflE and aflF may also play a role in the conversion of NOR to AVN. The cytochrome P450 monooxygenase aflG then catalyzes the hydroxylation of AVN to 5'hydroxyaverantin (HAVN). The next step is performed by the 5'-hydroxyaverantin dehydrogenase aflH that transforms HAVN to 5'-oxoaverantin (OAVN) which is further converted to averufin (AVF) by aflK that plays a dual role in the pathway, as a 5'-oxoaverantin cyclase that mediates conversion of 5'-oxoaverantin, as well as a versicolorin B synthase in a later step in the pathway. The averufin oxidase aflI catalyzes the conversion of AVF to versiconal hemiacetal acetate (VHA). VHA is then the substrate for the versiconal hemiacetal acetate esterase aflJ to yield versiconal (VAL). Versicolorin B synthase aflK then converts VAL to versicolorin B (VERB) by closing the bisfuran ring of aflatoxin which is required for DNA-binding, thus giving to aflatoxin its activity as a mutagen. Then, the activity of the versicolorin B desaturase aflL leads to versicolorin A (VERA). A branch point starts from VERB since it can also be converted to dihydrodemethylsterigmatocystin (DMDHST), probably also by aflL, VERA being a precursor for aflatoxins B1 and G1, and DMDHST for aflatoxins B2 and G2. Next, the versicolorin reductase aflM and the cytochrome P450 monooxygenase aflN are involved in conversion of VERA to demethylsterigmatocystin (DMST). AflX and aflY seem also involved in this step, through probable aflX-mediated epoxide ring-opening step following versicolorin A oxidation and aflY-mediated Baeyer-Villiger oxidation required for the formation of the xanthone ring. The methyltransferase aflO then leads to the modification of DMST to sterigmatocystin (ST), and of DMDHST to dihydrosterigmatocystin (DHST). Both ST and DHST are then substrates of the O-methyltransferase aflP to yield O-methylsterigmatocystin (OMST) and dihydro-O-methylsterigmatocystin (DHOMST), respectively. Finally OMST is converted to aflatoxins B1 and G1, and DHOMST to aflatoxins B2 and G2, via the action of several enzymes including O-methylsterigmatocystin oxidoreductase aflQ, the cytochrome P450 monooxygenase aflU, but also the NADH-dependent flavin oxidoreductase nadA which is specifically required for the synthesis of AFG1. This chain is Versicolorin B desaturase, found in Aspergillus parasiticus (strain ATCC 56775 / NRRL 5862 / SRRC 143 / SU-1).